A 163-amino-acid chain; its full sequence is MAEQDSNPVFQIQRVYLKDVSLEQPNSPQILLEQSQPQVDISLAVNAETVADGIYEVSVTATVTTKVADKTLFLCEAKQAGIFEIRNLPDGQTQPVLGIACPGIVYPYLRATVADIITRAGFPPVHLAEVNFQAMYEAQQQAAAQQQGAVSNGNGGSPIITNA.

This sequence belongs to the SecB family. Homotetramer, a dimer of dimers. One homotetramer interacts with 1 SecA dimer.

It localises to the cytoplasm. One of the proteins required for the normal export of preproteins out of the cell cytoplasm. It is a molecular chaperone that binds to a subset of precursor proteins, maintaining them in a translocation-competent state. It also specifically binds to its receptor SecA. The polypeptide is Protein-export protein SecB (Methylibium petroleiphilum (strain ATCC BAA-1232 / LMG 22953 / PM1)).